The chain runs to 256 residues: PHD finger protein ALFIN-LIKE 6 (256 aa).

The interval 144 to 200 is disordered; sequence SKDLSVNNNNSKSKPSGVKSRQSESLSKVAKMSSPPPKEEEEEEDESEDESEDDEQG. Residues 146–163 are compositionally biased toward low complexity; sequence DLSVNNNNSKSKPSGVKS. A compositionally biased stretch (acidic residues) spans 182–199; sequence EEEEEEDESEDESEDDEQ. A PHD-type zinc finger spans residues 200–252; the sequence is GAVCGACGDNYGTDEFWICCDACEKWFHGKCVKITPAKAEHIKHYKCPTCSNK.

It belongs to the Alfin family. As to quaternary structure, interacts with H3K4me3 and to a lesser extent with H3K4me2. Ubiquitously expressed.

The protein localises to the nucleus. Its function is as follows. Histone-binding component that specifically recognizes H3 tails trimethylated on 'Lys-4' (H3K4me3), which mark transcription start sites of virtually all active genes. The sequence is that of PHD finger protein ALFIN-LIKE 6 (AL6) from Arabidopsis thaliana (Mouse-ear cress).